We begin with the raw amino-acid sequence, 389 residues long: Dual-specificity RNA methyltransferase RlmN (389 aa).

The Proton acceptor role is filled by glutamate 94. Residues 134-367 enclose the Radical SAM core domain; it reads PRVRVTQCIS…CFVRRRRGDD (234 aa). Residues cysteine 141 and cysteine 372 are joined by a disulfide bond. [4Fe-4S] cluster-binding residues include cysteine 148, cysteine 152, and cysteine 155. S-adenosyl-L-methionine-binding positions include 197–198, serine 229, 253–255, and asparagine 329; these read GE and SLH. Residue cysteine 372 is the S-methylcysteine intermediate of the active site.

It belongs to the radical SAM superfamily. RlmN family. [4Fe-4S] cluster serves as cofactor.

Its subcellular location is the cytoplasm. The catalysed reaction is adenosine(2503) in 23S rRNA + 2 reduced [2Fe-2S]-[ferredoxin] + 2 S-adenosyl-L-methionine = 2-methyladenosine(2503) in 23S rRNA + 5'-deoxyadenosine + L-methionine + 2 oxidized [2Fe-2S]-[ferredoxin] + S-adenosyl-L-homocysteine. The enzyme catalyses adenosine(37) in tRNA + 2 reduced [2Fe-2S]-[ferredoxin] + 2 S-adenosyl-L-methionine = 2-methyladenosine(37) in tRNA + 5'-deoxyadenosine + L-methionine + 2 oxidized [2Fe-2S]-[ferredoxin] + S-adenosyl-L-homocysteine. In terms of biological role, specifically methylates position 2 of adenine 2503 in 23S rRNA and position 2 of adenine 37 in tRNAs. m2A2503 modification seems to play a crucial role in the proofreading step occurring at the peptidyl transferase center and thus would serve to optimize ribosomal fidelity. The polypeptide is Dual-specificity RNA methyltransferase RlmN (Sorangium cellulosum (strain So ce56) (Polyangium cellulosum (strain So ce56))).